The chain runs to 159 residues: uncharacterized protein (159 aa).

The next 2 membrane-spanning stretches (helical) occupy residues 59-79 (IGAL…ALVY) and 91-113 (VFSV…RRVC).

The protein localises to the cell membrane. This is an uncharacterized protein from Treponema pallidum (strain Nichols).